We begin with the raw amino-acid sequence, 288 residues long: NAD kinase (288 aa).

D70 acts as the Proton acceptor in catalysis. Residues 70–71, 144–145, R155, K172, D174, 185–190, and Q245 contribute to the NAD(+) site; these read DG, ND, and TGYSLS.

Belongs to the NAD kinase family. A divalent metal cation serves as cofactor.

It localises to the cytoplasm. The catalysed reaction is NAD(+) + ATP = ADP + NADP(+) + H(+). Involved in the regulation of the intracellular balance of NAD and NADP, and is a key enzyme in the biosynthesis of NADP. Catalyzes specifically the phosphorylation on 2'-hydroxyl of the adenosine moiety of NAD to yield NADP. The protein is NAD kinase of Citrifermentans bemidjiense (strain ATCC BAA-1014 / DSM 16622 / JCM 12645 / Bem) (Geobacter bemidjiensis).